Here is a 455-residue protein sequence, read N- to C-terminus: Exodeoxyribonuclease 7 large subunit (455 aa).

This sequence belongs to the XseA family. Heterooligomer composed of large and small subunits.

It localises to the cytoplasm. The catalysed reaction is Exonucleolytic cleavage in either 5'- to 3'- or 3'- to 5'-direction to yield nucleoside 5'-phosphates.. Bidirectionally degrades single-stranded DNA into large acid-insoluble oligonucleotides, which are then degraded further into small acid-soluble oligonucleotides. This is Exodeoxyribonuclease 7 large subunit from Escherichia coli O7:K1 (strain IAI39 / ExPEC).